Reading from the N-terminus, the 472-residue chain is Ribulose bisphosphate carboxylase large chain 1 (472 aa).

Substrate-binding residues include Asn-115 and Thr-165. Lys-167 functions as the Proton acceptor in the catalytic mechanism. Position 169 (Lys-169) interacts with substrate. Mg(2+) contacts are provided by Lys-193, Asp-195, and Glu-196. Residue Lys-193 is modified to N6-carboxylysine. The Proton acceptor role is filled by His-286. Substrate-binding residues include Arg-287, His-319, and Ser-371.

It belongs to the RuBisCO large chain family. Type I subfamily. In terms of assembly, heterohexadecamer of 8 large chains and 8 small chains. Mg(2+) is required as a cofactor.

The catalysed reaction is 2 (2R)-3-phosphoglycerate + 2 H(+) = D-ribulose 1,5-bisphosphate + CO2 + H2O. The enzyme catalyses D-ribulose 1,5-bisphosphate + O2 = 2-phosphoglycolate + (2R)-3-phosphoglycerate + 2 H(+). Its function is as follows. RuBisCO catalyzes two reactions: the carboxylation of D-ribulose 1,5-bisphosphate, the primary event in carbon dioxide fixation, as well as the oxidative fragmentation of the pentose substrate. Both reactions occur simultaneously and in competition at the same active site. This Allochromatium vinosum (strain ATCC 17899 / DSM 180 / NBRC 103801 / NCIMB 10441 / D) (Chromatium vinosum) protein is Ribulose bisphosphate carboxylase large chain 1.